Consider the following 444-residue polypeptide: Glutamyl-tRNA reductase (444 aa).

Residues T49–R52, S109, E114–Q116, and Q120 contribute to the substrate site. C50 acts as the Nucleophile in catalysis. G189–G194 lines the NADP(+) pocket.

The protein belongs to the glutamyl-tRNA reductase family. In terms of assembly, homodimer.

It catalyses the reaction (S)-4-amino-5-oxopentanoate + tRNA(Glu) + NADP(+) = L-glutamyl-tRNA(Glu) + NADPH + H(+). It participates in porphyrin-containing compound metabolism; protoporphyrin-IX biosynthesis; 5-aminolevulinate from L-glutamyl-tRNA(Glu): step 1/2. Functionally, catalyzes the NADPH-dependent reduction of glutamyl-tRNA(Glu) to glutamate 1-semialdehyde (GSA). This is Glutamyl-tRNA reductase from Bacillus cereus (strain 03BB102).